A 37-amino-acid chain; its full sequence is Large ribosomal subunit protein bL36c (37 aa).

It belongs to the bacterial ribosomal protein bL36 family.

Its subcellular location is the plastid. The protein resides in the chloroplast. The polypeptide is Large ribosomal subunit protein bL36c (Piper cenocladum (Ant piper)).